Consider the following 151-residue polypeptide: Superoxide dismutase [Cu-Zn] 4 (151 aa).

Residues His45, His47, and His62 each coordinate Cu cation. A disulfide bridge links Cys56 with Cys145. Zn(2+) contacts are provided by His62, His70, His79, and Asp82. Cu cation is bound at residue His120.

Belongs to the Cu-Zn superoxide dismutase family. Homodimer. Cu cation serves as cofactor. It depends on Zn(2+) as a cofactor.

It localises to the cytoplasm. It carries out the reaction 2 superoxide + 2 H(+) = H2O2 + O2. Destroys radicals which are normally produced within the cells and which are toxic to biological systems. Protects spores from cellular damage caused by UV LIGHT. The polypeptide is Superoxide dismutase [Cu-Zn] 4 (sodD) (Dictyostelium discoideum (Social amoeba)).